The sequence spans 109 residues: Latartoxin-2a (109 aa).

The signal sequence occupies residues 1-19 (MKVLVIIALCLVAFQSALS). Positions 20-37 (KKIENFESYIEDLKSEAR) are cleaved as a propeptide — removed in mature form. The short motif at 34-37 (SEAR) is the Processing quadruplet motif element. Intrachain disulfides connect Cys-39/Cys-56, Cys-46/Cys-67, Cys-55/Cys-81, Cys-69/Cys-79, and Cys-72/Cys-93. Residue Val-108 is modified to Valine amide.

This sequence belongs to the neurotoxin 19 (CSTX) family. 11 (latartoxin) subfamily. In terms of processing, contains 5 disulfide bonds. Cleavage of the propeptide depends on the processing quadruplet motif (XXXR, with at least one of X being E). In terms of tissue distribution, expressed by the venom gland.

The protein resides in the secreted. Functionally, insect toxin. Causes paralysis in larvae of C.vicina by depolarizing membranes at the neuromuscular junction. The polypeptide is Latartoxin-2a (Lachesana tarabaevi (Spider)).